The sequence spans 127 residues: Histone H2A (127 aa).

The segment covering M1–S20 has biased composition (basic residues). The tract at residues M1–A23 is disordered. The residue at position 2 (S2) is an N-acetylserine. S2 is modified (phosphoserine). K6, K9, and K11 each carry N6-acetyllysine; partial. Q106 carries the N5-methylglutamine modification. Residue K121 forms a Glycyl lysine isopeptide (Lys-Gly) (interchain with G-Cter in ubiquitin) linkage.

This sequence belongs to the histone H2A family. In terms of assembly, the nucleosome is a histone octamer containing two molecules each of H2A, H2B, H3 and H4 assembled in one H3-H4 heterotetramer and two H2A-H2B heterodimers. The octamer wraps approximately 147 bp of DNA. In terms of processing, monoubiquitination of Lys-121 gives a specific tag for epigenetic transcriptional repression. Phosphorylation on Ser-2 is enhanced during mitosis. Phosphorylation on Ser-2 directly represses transcription.

The protein localises to the nucleus. It localises to the chromosome. Functionally, core component of nucleosome. Nucleosomes wrap and compact DNA into chromatin, limiting DNA accessibility to the cellular machineries which require DNA as a template. Histones thereby play a central role in transcription regulation, DNA repair, DNA replication and chromosomal stability. DNA accessibility is regulated via a complex set of post-translational modifications of histones, also called histone code, and nucleosome remodeling. In Caenorhabditis elegans, this protein is Histone H2A (his-3).